The primary structure comprises 429 residues: Histidinol dehydrogenase (429 aa).

Residues Tyr127, Gln188, and Asn211 each coordinate NAD(+). Ser234, Gln256, and His259 together coordinate substrate. 2 residues coordinate Zn(2+): Gln256 and His259. Catalysis depends on proton acceptor residues Glu324 and His325. Substrate is bound by residues His325, Asp358, Glu412, and His417. Zn(2+) is bound at residue Asp358. His417 provides a ligand contact to Zn(2+).

This sequence belongs to the histidinol dehydrogenase family. Zn(2+) serves as cofactor.

The enzyme catalyses L-histidinol + 2 NAD(+) + H2O = L-histidine + 2 NADH + 3 H(+). It functions in the pathway amino-acid biosynthesis; L-histidine biosynthesis; L-histidine from 5-phospho-alpha-D-ribose 1-diphosphate: step 9/9. Catalyzes the sequential NAD-dependent oxidations of L-histidinol to L-histidinaldehyde and then to L-histidine. In Bacillus anthracis, this protein is Histidinol dehydrogenase.